The following is a 581-amino-acid chain: Serine/threonine-protein kinase SSN3 (581 aa).

Positions Leu-34–Met-57 are disordered. Polar residues predominate over residues Gly-48–Met-57. One can recognise a Protein kinase domain in the interval Tyr-85–Phe-475. ATP-binding positions include Ile-91–Val-99 and Lys-195. Asp-298 serves as the catalytic Proton acceptor.

Belongs to the protein kinase superfamily. CMGC Ser/Thr protein kinase family. CDC2/CDKX subfamily. As to quaternary structure, component of the SRB8-11 complex, a regulatory module of the Mediator complex. Requires Mg(2+) as cofactor.

It is found in the nucleus. The catalysed reaction is L-seryl-[protein] + ATP = O-phospho-L-seryl-[protein] + ADP + H(+). It catalyses the reaction L-threonyl-[protein] + ATP = O-phospho-L-threonyl-[protein] + ADP + H(+). The enzyme catalyses [DNA-directed RNA polymerase] + ATP = phospho-[DNA-directed RNA polymerase] + ADP + H(+). Component of the SRB8-11 complex. The SRB8-11 complex is a regulatory module of the Mediator complex which is itself involved in regulation of basal and activated RNA polymerase II-dependent transcription. The SRB8-11 complex may be involved in the transcriptional repression of a subset of genes regulated by Mediator. It may inhibit the association of the Mediator complex with RNA polymerase II to form the holoenzyme complex. The SRB8-11 complex phosphorylates the C-terminal domain (CTD) of the largest subunit of RNA polymerase II. This chain is Serine/threonine-protein kinase SSN3 (SSN3), found in Eremothecium gossypii (strain ATCC 10895 / CBS 109.51 / FGSC 9923 / NRRL Y-1056) (Yeast).